A 66-amino-acid polypeptide reads, in one-letter code: Large ribosomal subunit protein bL35 (66 aa).

Basic residues-rich tracts occupy residues 1–16 (MPKQKTHRASAKRFKR) and 31–45 (HRFHGKTKKQRRQLR). A disordered region spans residues 1–52 (MPKQKTHRASAKRFKRTGNGGLKRSNAYTSHRFHGKTKKQRRQLRKASMVSA).

The protein belongs to the bacterial ribosomal protein bL35 family.

In Ligilactobacillus salivarius (strain UCC118) (Lactobacillus salivarius), this protein is Large ribosomal subunit protein bL35.